A 619-amino-acid polypeptide reads, in one-letter code: Alpha-L-arabinofuranosidase C (619 aa).

The N-terminal stretch at M1–A37 is a signal peptide. In terms of domain architecture, CBM2 spans A38–A136. A disulfide bridge connects residues C39 and C133. The region spanning L163–V289 is the CBM6 domain. The disordered stretch occupies residues S300–Q319.

Belongs to the glycosyl hydrolase 62 family.

It is found in the secreted. The catalysed reaction is Hydrolysis of terminal non-reducing alpha-L-arabinofuranoside residues in alpha-L-arabinosides.. Its pathway is glycan metabolism; hemicellulose degradation. Xylanase C contributes to hydrolyze hemicellulose, the major component of plant cell-walls. The polypeptide is Alpha-L-arabinofuranosidase C (xynC) (Cellvibrio japonicus (strain Ueda107) (Pseudomonas fluorescens subsp. cellulosa)).